A 145-amino-acid polypeptide reads, in one-letter code: Superoxide dismutase [Mn/Fe] (145 aa).

Residues H10 and H64 each coordinate Fe(3+). Residues H10 and H64 each coordinate Mn(2+).

This sequence belongs to the iron/manganese superoxide dismutase family. It depends on Mn(2+) as a cofactor. The cofactor is Fe(3+).

It catalyses the reaction 2 superoxide + 2 H(+) = H2O2 + O2. Destroys superoxide anion radicals which are normally produced within the cells and which are toxic to biological systems. Catalyzes the dismutation of superoxide anion radicals into O2 and H2O2 by successive reduction and oxidation of the transition metal ion at the active site. The polypeptide is Superoxide dismutase [Mn/Fe] (sodA) (Streptococcus acidominimus).